The sequence spans 627 residues: Carene synthase 2, chloroplastic (627 aa).

The N-terminal 36 residues, 1 to 36 (MSVISIVPLASKSCLYKSLMSSTHELKALCRPIVTL), are a transit peptide targeting the chloroplast. Mg(2+) is bound by residues aspartate 378, aspartate 382, and aspartate 530. A DDXXD motif motif is present at residues 378–382 (DDMYD).

It belongs to the terpene synthase family. Tpsd subfamily. The cofactor is Mg(2+). Requires Mn(2+) as cofactor.

The protein resides in the plastid. It localises to the chloroplast. The catalysed reaction is (2E)-geranyl diphosphate = (+)-car-3-ene + diphosphate. Its pathway is terpene metabolism; oleoresin biosynthesis. Functionally, terpene synthase (TPS) involved in defensive oleoresin formation in conifers in response to insect attack (e.g. white pine weevil P.strobi) or other injury. The chain is Carene synthase 2, chloroplastic (TPS-3car2) from Picea sitchensis (Sitka spruce).